The chain runs to 268 residues: Eukaryotic translation initiation factor 2 subunit beta (268 aa).

Basic and acidic residues predominate over residues 1 to 12 (MADEINEIREEQ). Positions 1-85 (MADEINEIRE…LNNESVDAGE (85 aa)) are disordered. Ala-2 bears the N-acetylalanine mark. Phosphoserine; by CK2 occurs at positions 42, 80, and 112. A C4-type zinc finger spans residues 222 to 246 (CLGCKSPDTILSKENRLFFLRCEKC).

Belongs to the eIF-2-beta/eIF-5 family. As to quaternary structure, eukaryotic translation initiation factor 2 eIF2 is a heterotrimeric complex composed of an alpha, a beta and a gamma subunit. In terms of processing, phosphorylated at Ser-42, Ser-80 and Ser-112 by CK2.

Its subcellular location is the cytoplasm. It is found in the cytosol. In terms of biological role, component of the eIF2 complex that functions in the early steps of protein synthesis by forming a ternary complex with GTP and initiator tRNA. This complex binds to a 40S ribosomal subunit, followed by mRNA binding to form a 43S pre-initiation complex (43S PIC). Junction of the 60S ribosomal subunit to form the 80S initiation complex is preceded by hydrolysis of the GTP bound to eIF2 and release of an eIF2-GDP binary complex. In order for eIF2 to recycle and catalyze another round of initiation, the GDP bound to eIF2 must exchange with GTP by way of a reaction catalyzed by eIF2B. This chain is Eukaryotic translation initiation factor 2 subunit beta, found in Arabidopsis thaliana (Mouse-ear cress).